The primary structure comprises 236 residues: Regulatory protein cys-3 (236 aa).

Residues 26 to 89 (TLGQLQPIQP…MSVPPTPGAR (64 aa)) form a disordered region. Residues 28-37 (GQLQPIQPNP) are compositionally biased toward polar residues. The bZIP domain occupies 99-162 (LAAEEDKRKR…KWLKGLVTEK (64 aa)). Residues 105 to 137 (KRKRNTAASARFRIKKKQREQALEKSAKEMSEK) are basic motif. The tract at residues 141-155 (LEGRIQALETENKWL) is leucine-zipper. Residues 189–236 (AAAADKAEAAADKADAERAREESSFCVSTSSPSSDESVDTDNKKRRKD) form a disordered region. Positions 193 to 211 (DKAEAAADKADAERAREES) are enriched in basic and acidic residues. The segment covering 212 to 223 (SFCVSTSSPSSD) has biased composition (low complexity).

This sequence belongs to the bZIP family. GCN4 subfamily. Binds DNA as a dimer.

The protein resides in the nucleus. In terms of biological role, turns on the expression of structural genes which encode sulfur-catabolic enzymes. Binds to sequence elements upstream of these genes. The polypeptide is Regulatory protein cys-3 (cys-3) (Neurospora crassa (strain ATCC 24698 / 74-OR23-1A / CBS 708.71 / DSM 1257 / FGSC 987)).